Reading from the N-terminus, the 333-residue chain is L-lactate dehydrogenase A chain (333 aa).

A2 is modified (N-acetylalanine). NAD(+) contacts are provided by residues 30 to 58 (GAVG…MEDK) and R100. Substrate is bound by residues R107, N139, and R170. Residue N139 coordinates NAD(+). The Proton acceptor role is filled by H194. T249 serves as a coordination point for substrate.

Belongs to the LDH/MDH superfamily. LDH family. In terms of assembly, homotetramer.

It localises to the cytoplasm. It catalyses the reaction (S)-lactate + NAD(+) = pyruvate + NADH + H(+). The protein operates within fermentation; pyruvate fermentation to lactate; (S)-lactate from pyruvate: step 1/1. In terms of biological role, interconverts simultaneously and stereospecifically pyruvate and lactate with concomitant interconversion of NADH and NAD(+). The polypeptide is L-lactate dehydrogenase A chain (ldha) (Squalus acanthias (Spiny dogfish)).